The sequence spans 171 residues: MASSSSTYRSSSSSDGGNNNPSDSVVTVDERKRKRMLSNRESARRSRMRKQKHVDDLTAQINQLSNDNRQILNSLTVTSQLYMKIQAENSVLTAQMEELSTRLQSLNEIVDLVQSNGAGFGVDQIDGCGFDDRTVGIDGYYDDMNMMSNVNHWGGSVYTNQPIMANDINMY.

Low complexity predominate over residues 1–24 (MASSSSTYRSSSSSDGGNNNPSDS). The interval 1 to 54 (MASSSSTYRSSSSSDGGNNNPSDSVVTVDERKRKRMLSNRESARRSRMRKQKHV) is disordered. Residues 29–92 (DERKRKRMLS…MKIQAENSVL (64 aa)) enclose the bZIP domain. Positions 31–52 (RKRKRMLSNRESARRSRMRKQK) are basic motif. A leucine-zipper region spans residues 57-71 (LTAQINQLSNDNRQI).

As to quaternary structure, forms heterodimers with BZIP9, BZIP10, BZIP25 and BZIP63. Component of a ternary complex composed of BZIP2-BZIP63 heterodimer and KIN10.

The protein localises to the nucleus. Functionally, transcription factor that binds to specific DNA sequences in target gene promoters. BZIP2-BZIP63-KIN10 complex binds to the ETFQO promoter to up-regulate its transcription. The chain is bZIP transcription factor 2 from Arabidopsis thaliana (Mouse-ear cress).